The sequence spans 326 residues: Fructose operon regulatory protein (326 aa).

One can recognise an HTH lacI-type domain in the interval 1 to 58; the sequence is MTLDEIAKLAGVSKTTASYVINGKAQKYRISEKTQHKVMAVVEQYNFRPDHAASALRA. Residues 3–22 constitute a DNA-binding region (H-T-H motif); the sequence is LDEIAKLAGVSKTTASYVIN.

Homodimer.

With respect to regulation, interaction with F1P may induce a structural change in the DNA spacer region between the -35 and -10 elements, thereby facilitating RNAP binding to the promoter to trigger the transcriptional activation of the fru operon. Interaction with F1P does not release FruR from its binding sequence. Its function is as follows. Regulates the expression of the fruBKA (fru) operon, which encodes proteins involved in the import and metabolism of fructose. In the absence of fructose 1-phosphate (F1P), binds to the promoter region of fruB, interferes with the binding of the RNA polymerase (RNAP) to the promoter and represses the expression of the operon. In the presence of F1P, activates the transcription of the fru operon by facilitating the binding of RNAP to the promoter. Essential for the expression of the fru operon and thus for growth on fructose. The sequence is that of Fructose operon regulatory protein from Vibrio cholerae serotype O1 (strain ATCC 39315 / El Tor Inaba N16961).